The chain runs to 143 residues: Large ribosomal subunit protein uL15 (143 aa).

Residues 1–47 (MKLHELTPSEGSRFSRRRIGRGDSSGQGKTSGRGQKGQKARGKVRVG) form a disordered region. The segment covering 23–35 (DSSGQGKTSGRGQ) has biased composition (gly residues).

It belongs to the universal ribosomal protein uL15 family. As to quaternary structure, part of the 50S ribosomal subunit.

Its function is as follows. Binds to the 23S rRNA. This Lactiplantibacillus plantarum (strain ATCC BAA-793 / NCIMB 8826 / WCFS1) (Lactobacillus plantarum) protein is Large ribosomal subunit protein uL15.